The following is a 288-amino-acid chain: Phenazine biosynthesis-like domain-containing protein 1 (288 aa).

Glu46 is an active-site residue.

It belongs to the PhzF family.

This is Phenazine biosynthesis-like domain-containing protein 1 (Pbld1) from Mus musculus (Mouse).